The sequence spans 339 residues: 4-hydroxythreonine-4-phosphate dehydrogenase (339 aa).

His-141 and Thr-142 together coordinate substrate. A divalent metal cation is bound by residues His-171, His-215, and His-270. The substrate site is built by Lys-278, Asn-287, and Arg-296.

The protein belongs to the PdxA family. In terms of assembly, homodimer. Zn(2+) is required as a cofactor. Mg(2+) serves as cofactor. The cofactor is Co(2+).

The protein resides in the cytoplasm. It carries out the reaction 4-(phosphooxy)-L-threonine + NAD(+) = 3-amino-2-oxopropyl phosphate + CO2 + NADH. Its pathway is cofactor biosynthesis; pyridoxine 5'-phosphate biosynthesis; pyridoxine 5'-phosphate from D-erythrose 4-phosphate: step 4/5. Its function is as follows. Catalyzes the NAD(P)-dependent oxidation of 4-(phosphooxy)-L-threonine (HTP) into 2-amino-3-oxo-4-(phosphooxy)butyric acid which spontaneously decarboxylates to form 3-amino-2-oxopropyl phosphate (AHAP). In Geobacter metallireducens (strain ATCC 53774 / DSM 7210 / GS-15), this protein is 4-hydroxythreonine-4-phosphate dehydrogenase.